A 204-amino-acid polypeptide reads, in one-letter code: Glutathione S-transferase (204 aa).

Residues 3–80 form the GST N-terminal domain; the sequence is PSYKLTYCPV…YLGKQFGLSG (78 aa). Residues Y9, W40, K44, 50–52, and 64–65 each bind glutathione; these read GKT and QS. One can recognise a GST C-terminal domain in the interval 82–204; sequence DDWENLEIDM…WVAKRPPTDL (123 aa).

The protein belongs to the GST superfamily. Sigma family.

It catalyses the reaction RX + glutathione = an S-substituted glutathione + a halide anion + H(+). This is Glutathione S-transferase from Blattella germanica (German cockroach).